A 608-amino-acid polypeptide reads, in one-letter code: Histone-arginine methyltransferase CARM1 (608 aa).

An N-acetylalanine modification is found at Ala-2. An interaction with C9orf72 region spans residues 27–138 (ATVSVFPGAR…GHTLERSVFS (112 aa)). One can recognise an SAM-dependent MTase PRMT-type domain in the interval 146-453 (AVQYFQFYGY…KRQSYDISIV (308 aa)). 4 residues coordinate S-adenosyl-L-methionine: Gln-159, Arg-168, Gly-192, and Glu-214. Residue Ser-216 is modified to Phosphoserine. Lys-227 is covalently cross-linked (Glycyl lysine isopeptide (Lys-Gly) (interchain with G-Cter in ubiquitin)). S-adenosyl-L-methionine contacts are provided by Glu-243 and Ser-271. The segment at 346-379 (RILMAKSVKYTVNFLEAKEGDLHRIEIPFKFHML) is required for nuclear translocation. The interval 499–608 (TGSTYNLSSG…IPTNTMHYGS (110 aa)) is transactivation domain. A Dimethylated arginine modification is found at Arg-550.

This sequence belongs to the class I-like SAM-binding methyltransferase superfamily. Protein arginine N-methyltransferase family. In terms of assembly, homodimer. Interacts with NR1H4. Interacts with SNRPC. Interacts with the C-terminus of NCOA2/GRIP1, NCO3/ACTR and NCOA1/SRC1. Part of a complex consisting of CARM1, EP300/P300 and NCOA2/GRIP1. Interacts with FLII, TP53, myogenic factor MEF2, EP300/P300, TRIM24, CREBBP and CTNNB1. Interacts with RELA. Identified in a complex containing CARM1, TRIM24 and NCOA2/GRIP1. Interacts with NCOA3/SRC3. Interacts with SKP2. Interacts (via PH domain-like fold) with C9orf72. Interacts with PARP1; promoting PARP1 recruimtent to replication forks. As to quaternary structure, (Microbial infection) Interacts with HTLV-1 protein Tax. In terms of processing, auto-methylated on Arg-550. Methylation enhances transcription coactivator activity. Methylation is required for its role in the regulation of pre-mRNA alternative splicing. Post-translationally, phosphorylation at Ser-216 is strongly increased during mitosis, and decreases rapidly to a very low, basal level after entry into the G1 phase of the cell cycle. Phosphorylation at Ser-216 may promote location in the cytosol. Phosphorylation at Ser-216 interferes with S-adenosyl-L-methionine binding and strongly reduces methyltransferase activity. Ubiquitinated by E3 ubiquitin-protein ligase complex containing FBXO9 at Lys-227; leading to proteasomal degradation. As to expression, overexpressed in prostate adenocarcinomas and high-grade prostatic intraepithelial neoplasia.

The protein localises to the nucleus. The protein resides in the cytoplasm. It is found in the chromosome. It carries out the reaction L-arginyl-[protein] + 2 S-adenosyl-L-methionine = N(omega),N(omega)-dimethyl-L-arginyl-[protein] + 2 S-adenosyl-L-homocysteine + 2 H(+). Methylation of H3R17 (H3R17me) by CARM1 is stimulated by preacetylation of H3 'Lys-18' (H3K18ac) H3 'Lys-23' (H3K23ac) by EP300 and blocked by citrullination of H3 'Arg-17' (H3R17ci) by PADI4. Its function is as follows. Methylates (mono- and asymmetric dimethylation) the guanidino nitrogens of arginyl residues in several proteins involved in DNA packaging, transcription regulation, pre-mRNA splicing, and mRNA stability. Recruited to promoters upon gene activation together with histone acetyltransferases from EP300/P300 and p160 families, methylates histone H3 at 'Arg-17' (H3R17me), forming mainly asymmetric dimethylarginine (H3R17me2a), leading to activation of transcription via chromatin remodeling. During nuclear hormone receptor activation and TCF7L2/TCF4 activation, acts synergically with EP300/P300 and either one of the p160 histone acetyltransferases NCOA1/SRC1, NCOA2/GRIP1 and NCOA3/ACTR or CTNNB1/beta-catenin to activate transcription. During myogenic transcriptional activation, acts together with NCOA3/ACTR as a coactivator for MEF2C. During monocyte inflammatory stimulation, acts together with EP300/P300 as a coactivator for NF-kappa-B. Acts as a coactivator for PPARG, promotes adipocyte differentiation and the accumulation of brown fat tissue. Plays a role in the regulation of pre-mRNA alternative splicing by methylation of splicing factors. Also seems to be involved in p53/TP53 transcriptional activation. Methylates EP300/P300, both at 'Arg-2142', which may loosen its interaction with NCOA2/GRIP1, and at 'Arg-580' and 'Arg-604' in the KIX domain, which impairs its interaction with CREB and inhibits CREB-dependent transcriptional activation. Also methylates arginine residues in RNA-binding proteins PABPC1, ELAVL1 and ELAV4, which may affect their mRNA-stabilizing properties and the half-life of their target mRNAs. Acts as a transcriptional coactivator of ACACA/acetyl-CoA carboxylase by enriching H3R17 methylation at its promoter, thereby positively regulating fatty acid synthesis. Independently of its methyltransferase activity, involved in replication fork progression: promotes PARP1 recruitment to replication forks, leading to poly-ADP-ribosylation of chromatin at replication forks and reduced fork speed. The protein is Histone-arginine methyltransferase CARM1 (CARM1) of Homo sapiens (Human).